The sequence spans 461 residues: Glutamate-gated chloride channel alpha (461 aa).

The N-terminal stretch at 1-20 (MATWIVGKLIIASLILGIQA) is a signal peptide. Residues 21 to 275 (QQARTKSQDI…TTIQLKREFS (255 aa)) are Extracellular-facing. Residues R98, R117, and S182 each coordinate L-glutamate. A disulfide bridge connects residues C191 and C205. S211 contacts L-glutamate. N-linked (GlcNAc...) asparagine glycosylation is present at N246. An intrachain disulfide couples C252 to C263. A helical transmembrane segment spans residues 276-298 (FYLLQLYIPSCMLVIVSWVSFWF). The Cytoplasmic portion of the chain corresponds to 299 to 303 (DRTAI). The chain crosses the membrane as a helical span at residues 304 to 325 (PARVTLGVTTLLTMTAQSAGIN). At 326-332 (SQLPPVS) the chain is on the extracellular side. The chain crosses the membrane as a helical span at residues 333 to 353 (YIKAIDVWIGACMTFIFCALL). The Cytoplasmic portion of the chain corresponds to 354–432 (EFALVNHIAN…EWNDISKRVD (79 aa)). A helical transmembrane segment spans residues 433 to 454 (LISRALFPVLFFVFNILYWSRF). Residues 455 to 461 (GQQNVLF) lie on the Extracellular side of the membrane.

The protein belongs to the ligand-gated ion channel (TC 1.A.9) family. Glutamate-gated chloride channel (TC 1.A.9.4) subfamily. Pentamer. Homooligomer, forms functional heterooligomers with glc-2.

It is found in the postsynaptic cell membrane. Its subcellular location is the cell membrane. In terms of biological role, glutamate-gated chloride channel subunit; channel properties depend on the subunit composition. Glutamate binding triggers a rapidly reversible current in heteromeric channels formed by glc-1 and glc-2, while the anti-helmintic drug ivermectin and other avermectins trigger a permanently open channel configuration. Channels containing only glc-1 are activated by ivermectin, but not by glutamate alone (in vitro). The heteromeric channel formed by glc-1 and glc-2 is also activated by ibotenate, and it is blocked by picrotoxin and flufenamic acid. Plays a role in the regulation of locomotor behavior. This chain is Glutamate-gated chloride channel alpha, found in Caenorhabditis elegans.